The following is a 2568-amino-acid chain: Highly reducing polyketide synthase AN6791 (2568 aa).

The 435-residue stretch at 11 to 445 (AEPIAIVGLS…GTNAHLIVES (435 aa)) folds into the Ketosynthase family 3 (KS3) domain. Residues Cys200, His326, and His366 each act as for beta-ketoacyl synthase activity in the active site. The Malonyl-CoA:ACP transacylase (MAT) domain occupies 558 to 882 (VFTGQGAQWY…GSLVREVSAV (325 aa)). The tract at residues 949–1087 (HDLLGSLVLG…GLITMEPEDA (139 aa)) is N-terminal hotdog fold. The region spanning 949 to 1258 (HDLLGSLVLG…FQSVGRSAAP (310 aa)) is the PKS/mFAS DH domain. The active-site Proton acceptor; for dehydratase activity is the His981. The C-terminal hotdog fold stretch occupies residues 1104–1258 (TRRFGPSDLY…FQSVGRSAAP (155 aa)). Residue Asp1169 is the Proton donor; for dehydratase activity of the active site. Positions 1311-1620 (RACLYFIYDA…EVRDCESDEW (310 aa)) are methyltransferase (CMet) domain. Residues 1857–2174 (GLLDTIAFDD…VGKHSGKVVL (318 aa)) form the Enoyl reductase (ER) domain. One can recognise a Ketoreductase (KR) domain in the interval 2197–2375 (ASYLLVGGAG…AVSMDLGPVK (179 aa)). The region spanning 2481-2558 (QAEKLVVEAI…ALASEVTRKS (78 aa)) is the Carrier domain. An O-(pantetheine 4'-phosphoryl)serine modification is found at Ser2518.

Requires pantetheine 4'-phosphate as cofactor.

It functions in the pathway secondary metabolite biosynthesis. Functionally, highly reducing polyketide synthase; part of a cluster that mediates the biosynthesis of a yet undetermined secondary metabolite. With esterase AN6793, produces a pathway intermediate compound with molecular weight 258. In Emericella nidulans (strain FGSC A4 / ATCC 38163 / CBS 112.46 / NRRL 194 / M139) (Aspergillus nidulans), this protein is Highly reducing polyketide synthase AN6791.